We begin with the raw amino-acid sequence, 212 residues long: Thiamine-phosphate synthase (212 aa).

4-amino-2-methyl-5-(diphosphooxymethyl)pyrimidine is bound by residues 40–44 and N75; that span reads QFREK. The Mg(2+) site is built by D76 and D95. Residue S113 participates in 4-amino-2-methyl-5-(diphosphooxymethyl)pyrimidine binding. A 2-[(2R,5Z)-2-carboxy-4-methylthiazol-5(2H)-ylidene]ethyl phosphate-binding site is contributed by 139–141; it reads TTS. K142 contributes to the 4-amino-2-methyl-5-(diphosphooxymethyl)pyrimidine binding site. 2-[(2R,5Z)-2-carboxy-4-methylthiazol-5(2H)-ylidene]ethyl phosphate contacts are provided by residues G171 and 191–192; that span reads IS.

It belongs to the thiamine-phosphate synthase family. Mg(2+) is required as a cofactor.

The catalysed reaction is 2-[(2R,5Z)-2-carboxy-4-methylthiazol-5(2H)-ylidene]ethyl phosphate + 4-amino-2-methyl-5-(diphosphooxymethyl)pyrimidine + 2 H(+) = thiamine phosphate + CO2 + diphosphate. The enzyme catalyses 2-(2-carboxy-4-methylthiazol-5-yl)ethyl phosphate + 4-amino-2-methyl-5-(diphosphooxymethyl)pyrimidine + 2 H(+) = thiamine phosphate + CO2 + diphosphate. It catalyses the reaction 4-methyl-5-(2-phosphooxyethyl)-thiazole + 4-amino-2-methyl-5-(diphosphooxymethyl)pyrimidine + H(+) = thiamine phosphate + diphosphate. It functions in the pathway cofactor biosynthesis; thiamine diphosphate biosynthesis; thiamine phosphate from 4-amino-2-methyl-5-diphosphomethylpyrimidine and 4-methyl-5-(2-phosphoethyl)-thiazole: step 1/1. In terms of biological role, condenses 4-methyl-5-(beta-hydroxyethyl)thiazole monophosphate (THZ-P) and 2-methyl-4-amino-5-hydroxymethyl pyrimidine pyrophosphate (HMP-PP) to form thiamine monophosphate (TMP). This chain is Thiamine-phosphate synthase, found in Staphylococcus saprophyticus subsp. saprophyticus (strain ATCC 15305 / DSM 20229 / NCIMB 8711 / NCTC 7292 / S-41).